Reading from the N-terminus, the 213-residue chain is Kynurenine formamidase (213 aa).

Residue W18 coordinates substrate. Residues H48, H52, and D54 each contribute to the Zn(2+) site. The active-site Proton donor/acceptor is the H58. 2 residues coordinate Zn(2+): H160 and E172.

Belongs to the Cyclase 1 superfamily. KynB family. Homodimer. Requires Zn(2+) as cofactor.

It carries out the reaction N-formyl-L-kynurenine + H2O = L-kynurenine + formate + H(+). Its pathway is amino-acid degradation; L-tryptophan degradation via kynurenine pathway; L-kynurenine from L-tryptophan: step 2/2. Functionally, catalyzes the hydrolysis of N-formyl-L-kynurenine to L-kynurenine, the second step in the kynurenine pathway of tryptophan degradation. This Burkholderia cenocepacia (strain ATCC BAA-245 / DSM 16553 / LMG 16656 / NCTC 13227 / J2315 / CF5610) (Burkholderia cepacia (strain J2315)) protein is Kynurenine formamidase.